Reading from the N-terminus, the 837-residue chain is Protein translocase subunit SecA 1 (837 aa).

Residues Gln85, 103 to 107, and Asp492 contribute to the ATP site; that span reads GEGKT. Residues 787–806 show a composition bias toward basic and acidic residues; the sequence is QEVAKGEAVHPKEDGEEPKK. The segment at 787 to 813 is disordered; sequence QEVAKGEAVHPKEDGEEPKKKPIRKAV. Zn(2+)-binding residues include Cys821, Cys823, Cys832, and Cys833.

Belongs to the SecA family. Monomer and homodimer. Part of the essential Sec protein translocation apparatus which comprises SecA, SecYEG and auxiliary proteins SecDF. Other proteins may also be involved. Requires Zn(2+) as cofactor.

The protein localises to the cell membrane. The protein resides in the cytoplasm. It carries out the reaction ATP + H2O + cellular proteinSide 1 = ADP + phosphate + cellular proteinSide 2.. In terms of biological role, part of the Sec protein translocase complex. Interacts with the SecYEG preprotein conducting channel. Has a central role in coupling the hydrolysis of ATP to the transfer of proteins into and across the cell membrane, serving as an ATP-driven molecular motor driving the stepwise translocation of polypeptide chains across the membrane. The chain is Protein translocase subunit SecA 1 from Geobacillus thermodenitrificans (strain NG80-2).